A 44-amino-acid polypeptide reads, in one-letter code: Antimicrobial peptide 1b (44 aa).

Residues 1 to 42 (AQKCGEQGRGAKCPNCLCCGRYGFCGSTPDYCGVGCQSQCRG) form the Chitin-binding type-1 domain. Intrachain disulfides connect cysteine 4–cysteine 19, cysteine 13–cysteine 25, cysteine 16–cysteine 43, cysteine 18–cysteine 32, and cysteine 36–cysteine 40.

Post-translationally, contains 5 disulfide bonds.

Functionally, binds chitin. Has antifungal activity against F.oxysporum 16/10 (IC(50)=4.1 uM) and B.sorokiniana 6/10 (IC(50)=2.7 uM). Inhibits germination of fungal spores. The chain is Antimicrobial peptide 1b from Leymus arenarius (Lyme grass).